The following is a 209-amino-acid chain: Octanoyltransferase (209 aa).

Residues 30–209 enclose the BPL/LPL catalytic domain; sequence DHKPEIIYLV…IQTEFNKIFK (180 aa). Residues 69–76, 143–145, and 156–158 each bind substrate; these read RGGKFTFH, AIG, and GVA. Residue C174 is the Acyl-thioester intermediate of the active site.

This sequence belongs to the LipB family.

The protein localises to the cytoplasm. The enzyme catalyses octanoyl-[ACP] + L-lysyl-[protein] = N(6)-octanoyl-L-lysyl-[protein] + holo-[ACP] + H(+). It functions in the pathway protein modification; protein lipoylation via endogenous pathway; protein N(6)-(lipoyl)lysine from octanoyl-[acyl-carrier-protein]: step 1/2. Its function is as follows. Catalyzes the transfer of endogenously produced octanoic acid from octanoyl-acyl-carrier-protein onto the lipoyl domains of lipoate-dependent enzymes. Lipoyl-ACP can also act as a substrate although octanoyl-ACP is likely to be the physiological substrate. This chain is Octanoyltransferase, found in Rickettsia conorii (strain ATCC VR-613 / Malish 7).